The following is a 525-amino-acid chain: uncharacterized protein (525 aa).

Polar residues-rich tracts occupy residues 139-149 and 336-349; these read LNSTPDKTQAG and SGKT…HTTS. Disordered regions lie at residues 139–158 and 330–356; these read LNST…HQAP and PAPA…PYAT.

This is an uncharacterized protein from Treponema pallidum (strain Nichols).